Reading from the N-terminus, the 955-residue chain is Histone deacetylase 6 (955 aa).

2 histone deacetylase regions span residues 15–337 (TLIG…YAPF) and 425–749 (METL…VLQN). The active-site 1 is H146. The active-site 2 is H561. Residues 815–840 (SIDMADQSSSSGSSSSSTRPSHNLEI) are disordered. Residues 818–831 (MADQSSSSGSSSSS) show a composition bias toward low complexity. A UBP-type zinc finger spans residues 853 to 951 (ATCPHLKEVK…SAAHESKFGE (99 aa)). 7 residues coordinate Zn(2+): C855, H857, C875, C878, C887, C890, and C895. The ubiquitin binding stretch occupies residues 896 to 898 (GRF). Zn(2+)-binding residues include H902, H906, H912, C925, and C928. A ubiquitin binding region spans residues 924-931 (WCYPCDSY).

The protein belongs to the histone deacetylase family. HD type 2 subfamily. Zn(2+) serves as cofactor.

The protein localises to the nucleus. It catalyses the reaction N(6)-acetyl-L-lysyl-[histone] + H2O = L-lysyl-[histone] + acetate. Probable histone deacetylase. Histone deacetylases are responsible for the deacetylation of lysine residues on the N-terminal part of the core histones (H2A, H2B, H3 and H4). Histone deacetylation gives a tag for epigenetic repression and plays an important role in transcriptional regulation, cell cycle progression and developmental events. Histone deacetylases act via the formation of large multiprotein complexes. This is Histone deacetylase 6 (hda-6) from Caenorhabditis elegans.